Consider the following 526-residue polypeptide: Methyltetrahydroprotoberberine 14-monooxygenase (526 aa).

Residues 14–34 (LLLQYLQPISVALVVIALVWN) form a helical membrane-spanning segment. Position 468 (Cys468) interacts with heme.

This sequence belongs to the cytochrome P450 family. The cofactor is heme. Mainly expressed in roots, and barely in stems, leaves and carpels.

The protein localises to the membrane. The catalysed reaction is (S)-cis-N-methylcanadine + reduced [NADPH--hemoprotein reductase] + O2 = allocryptopine + oxidized [NADPH--hemoprotein reductase] + H2O + 2 H(+). It catalyses the reaction (S)-cis-N-methylstylopine + reduced [NADPH--hemoprotein reductase] + O2 = protopine + oxidized [NADPH--hemoprotein reductase] + H2O + 2 H(+). It carries out the reaction (S)-cis-N-methyltetrahydrothalifendine + reduced [NADPH--hemoprotein reductase] + O2 = 7-hydroxy-8-methoxy-11-methyl-17,19-dioxa-11-azatetracyclo[12.7.0.0(4,9).0(16,20)]henicosa-1(21),4(9),5,7,14,16(20)-hexaen-2-one + oxidized [NADPH--hemoprotein reductase] + H2O + 2 H(+). The enzyme catalyses (S)-cis-N-methyltetrahydropalmatine + reduced [NADPH--hemoprotein reductase] + O2 = muramine + oxidized [NADPH--hemoprotein reductase] + H2O + 2 H(+). Its pathway is alkaloid biosynthesis. Its activity is regulated as follows. Repressed by cytochrome P450 inhibitors ketoconazole, metyrapone, prochloraz, ancymidol and cytochrome C. Its function is as follows. Involved in the biosynthesis of the isoquinoline alkaloid sanguinarine. Catalyzes the conversion of N-methylated protoberberine alkaloids N-methylstylopine and N-methylcanadine into protopine and allocryptopine, respectively. Can also use (S)-cis-N-methyltetrahydrothalifendine and (S)-cis-N-methyltetrahydropalmatine as substrates. This is Methyltetrahydroprotoberberine 14-monooxygenase from Papaver somniferum (Opium poppy).